The chain runs to 106 residues: L-rhamnose mutarotase (106 aa).

Tyr20 contributes to the substrate binding site. His24 acts as the Proton donor in catalysis. Substrate-binding positions include Tyr43 and 78-79 (WW).

The protein belongs to the rhamnose mutarotase family. In terms of assembly, homodimer.

It is found in the cytoplasm. It catalyses the reaction alpha-L-rhamnose = beta-L-rhamnose. It functions in the pathway carbohydrate metabolism; L-rhamnose metabolism. In terms of biological role, involved in the anomeric conversion of L-rhamnose. The protein is L-rhamnose mutarotase of Leptothrix cholodnii (strain ATCC 51168 / LMG 8142 / SP-6) (Leptothrix discophora (strain SP-6)).